The primary structure comprises 551 residues: Trigger factor (551 aa).

One can recognise a PPIase FKBP-type domain in the interval 165 to 250; sequence GDLVVLDFAG…ATDVRVPGET (86 aa). Residues 442-551 are disordered; it reads ADDDTIGKGH…APAKKKAAAE (110 aa). The span at 458-472 shows a compositional bias: basic and acidic residues; the sequence is GHDHHDHDHDHDHAA. Low complexity predominate over residues 513–541; that stretch reads EAAPAPKKAPAKKAAAAKAEEAPAAAPKK. Over residues 542 to 551 the composition is skewed to basic residues; the sequence is APAKKKAAAE.

Belongs to the FKBP-type PPIase family. Tig subfamily.

It is found in the cytoplasm. The catalysed reaction is [protein]-peptidylproline (omega=180) = [protein]-peptidylproline (omega=0). Involved in protein export. Acts as a chaperone by maintaining the newly synthesized protein in an open conformation. Functions as a peptidyl-prolyl cis-trans isomerase. In Rhizorhabdus wittichii (strain DSM 6014 / CCUG 31198 / JCM 15750 / NBRC 105917 / EY 4224 / RW1) (Sphingomonas wittichii), this protein is Trigger factor.